The primary structure comprises 272 residues: Glutamate racemase (272 aa).

Substrate is bound by residues D10–S11 and Y42–G43. The active-site Proton donor/acceptor is C73. N74–T75 is a binding site for substrate. The active-site Proton donor/acceptor is the C183. Residue T184–H185 participates in substrate binding.

Belongs to the aspartate/glutamate racemases family.

It catalyses the reaction L-glutamate = D-glutamate. Its pathway is cell wall biogenesis; peptidoglycan biosynthesis. In terms of biological role, provides the (R)-glutamate required for cell wall biosynthesis. The protein is Glutamate racemase of Leifsonia xyli subsp. xyli (strain CTCB07).